A 569-amino-acid polypeptide reads, in one-letter code: Cysteine--tRNA ligase CPS1 homolog, chloroplastic/mitochondrial (569 aa).

The N-terminal 42 residues, 1–42 (MAAARRAAGLLPLLLSSPSRARLPHRQALALTPPLLRPHRLY), are a transit peptide targeting the chloroplast and mitochondrion. Zn(2+) is bound at residue Cys99. A 'HIGH' region motif is present at residues 101 to 111 (VTPYDDSHIGH). Residues Cys279, His304, and Glu308 each coordinate Zn(2+). The short motif at 336-340 (KMSKS) is the 'KMSKS' region element. Lys339 serves as a coordination point for ATP.

This sequence belongs to the class-I aminoacyl-tRNA synthetase family. It depends on Zn(2+) as a cofactor.

Its subcellular location is the plastid. The protein resides in the chloroplast. The protein localises to the mitochondrion. The catalysed reaction is tRNA(Cys) + L-cysteine + ATP = L-cysteinyl-tRNA(Cys) + AMP + diphosphate. Nuclear genome-encoded factor required for normal assembly of chloroplast polysomes. This is Cysteine--tRNA ligase CPS1 homolog, chloroplastic/mitochondrial from Oryza sativa subsp. japonica (Rice).